Here is a 161-residue protein sequence, read N- to C-terminus: MAEPSLPLSFLCLLALSSACYIQNCPRGGKRALGDTALRQCLPCGPGNRGRCFGPGICCGAELGCYLGTAETRRCAEEDYMPSPCQAGGQPCGSDGRCAANGVCCSADTCAMDAVCLEEGSEQAEEAAEKNLTVLDGAAGDLLLRLMHLANRQQQGKQPGL.

An N-terminal signal peptide occupies residues 1 to 19 (MAEPSLPLSFLCLLALSSA). Cysteines 20 and 25 form a disulfide. Position 28 is a glycine amide (glycine 28). 7 disulfides stabilise this stretch: cysteine 41–cysteine 85, cysteine 44–cysteine 58, cysteine 52–cysteine 75, cysteine 59–cysteine 65, cysteine 92–cysteine 104, cysteine 98–cysteine 116, and cysteine 105–cysteine 110.

Belongs to the vasopressin/oxytocin family. Post-translationally, seven disulfide bonds are present in neurophysin.

Its subcellular location is the secreted. Vasotocin is an antidiuretic hormone. This chain is Vasotocin-neurophysin VT, found in Gallus gallus (Chicken).